The chain runs to 196 residues: Penicillin-binding protein activator LpoB (196 aa).

An N-terminal signal peptide occupies residues 1–16 (MKKYLGIVLMALVIAG). C17 carries N-palmitoyl cysteine lipidation. C17 carries S-diacylglycerol cysteine lipidation. Residues 24–54 (TEQPATIEPAVPTPSKPQLPPSESQPLPTPP) are disordered. The span at 34–43 (VPTPSKPQLP) shows a compositional bias: pro residues.

This sequence belongs to the LpoB family. Interacts with PBP1b.

It is found in the cell outer membrane. In terms of biological role, regulator of peptidoglycan synthesis that is essential for the function of penicillin-binding protein 1B (PBP1b). The protein is Penicillin-binding protein activator LpoB of Dickeya dadantii (strain 3937) (Erwinia chrysanthemi (strain 3937)).